The chain runs to 107 residues: Iron-sulfur cluster assembly protein CyaY (107 aa).

Belongs to the frataxin family.

Involved in iron-sulfur (Fe-S) cluster assembly. May act as a regulator of Fe-S biogenesis. The sequence is that of Iron-sulfur cluster assembly protein CyaY from Yersinia pseudotuberculosis serotype O:1b (strain IP 31758).